We begin with the raw amino-acid sequence, 126 residues long: Cornifin alpha (126 aa).

N-acetylserine is present on Ser2. 13 repeat units span residues 3-14, 18-29, 31-38, 39-46, 47-54, 55-62, 63-70, 71-78, 79-86, 87-94, 95-102, 103-110, and 111-118. The tract at residues 3–29 is 2 X 12 AA approximate repeats; sequence SQQQKQPCTLPPQLQQHQVKQPCQPPP. The disordered stretch occupies residues 20-43; sequence QVKQPCQPPPQEPCVPKTKEPCQP. The segment at 31–122 is 11 X 8 AA approximate tandem repeats; it reads EPCVPKTKEP…CQPKVPEPCQ (92 aa). The disordered stretch occupies residues 104-126; the sequence is PCQSKVPQPCQPKVPEPCQTKQK.

This sequence belongs to the cornifin (SPRR) family. Suprabasal layers of squamous-differentiated tissues such as epidermis, esophagus, tongue and trachea.

The protein localises to the cytoplasm. Functionally, cross-linked envelope protein of keratinocytes. It is a keratinocyte protein that first appears in the cell cytosol, but ultimately becomes cross-linked to membrane proteins by transglutaminase. All that results in the formation of an insoluble envelope beneath the plasma membrane. This chain is Cornifin alpha, found in Oryctolagus cuniculus (Rabbit).